The sequence spans 201 residues: Small ribosomal subunit protein uS4c (201 aa).

The tract at residues 15 to 44 (LGALPGLTNKRPRAGSDLRNQSRSGKKSQY) is disordered. The 61-residue stretch at 89 to 149 (MRLDNILFRL…DEQNSRALIQ (61 aa)) folds into the S4 RNA-binding domain.

This sequence belongs to the universal ribosomal protein uS4 family. As to quaternary structure, part of the 30S ribosomal subunit. Contacts protein S5. The interaction surface between S4 and S5 is involved in control of translational fidelity.

The protein resides in the plastid. The protein localises to the chloroplast. One of the primary rRNA binding proteins, it binds directly to 16S rRNA where it nucleates assembly of the body of the 30S subunit. In terms of biological role, with S5 and S12 plays an important role in translational accuracy. This chain is Small ribosomal subunit protein uS4c (rps4), found in Daucus carota (Wild carrot).